Reading from the N-terminus, the 701-residue chain is MARTTPIGRYRNIGIVAHVDAGKTTTTERVLFYTGKSHKMGEVHDGAATTDWMVQEQERGITITSAAITAFWQGSEKQHKDQYRFNVIDTPGHVDFTIEVERSLRVLDGAVVVFCGTSGVEPQSETVWRQANKYGVPRIVYVNKMDRAGANFLRVIAQIKQRLGHTPVPIQLAIGAEDNFQGQIDLMSMEAVYWNDADKGMVPRREPIPAELQELADEWRSNMVEAAAEASEELMNKYLEGEELTNEEIKAALRQRTIAGEIVLAVCGSSFKNKGVPLVLDAVIDYLPAPTDIPAIKGSDPDNEEVLMERHADDNEPFSALAFKIATDPFVGTLTFVRVYSGVLASGDGVINSVKGKKERVGRMVQMHANAREEIKEVRAGDIAALIGMKDVTTGETLCNADKPIILVRMDFPEPVISVAVEPKTKDDQEKMGIALGKLAQEDPSFRVKTDEETGQTIISGMGELHLDILVDRMRREFNVEANIGKPQVSYRERITKNCEIEGKFVRQSGGRGQFGHCWIRFAPADEGQEGLQFVNEVVGGVVPKEYIPAIQKGIEEQMKNGVVAGYPLIGLKATVFDGSYHDVDSNEMAFKVAASMATKQLAQKGGGELLEPIMAVEVVTPEDYMGDVMGDLNRRRGMILGMEDTVSGKVIRAEVPLGEMFGYATDVRSMSQGRASYSMEFKKYNTAPSHIVETVTKKQG.

The tr-type G domain maps to 8-291 (GRYRNIGIVA…AVIDYLPAPT (284 aa)). Residues 17–24 (AHVDAGKT), 89–93 (DTPGH), and 143–146 (NKMD) contribute to the GTP site.

The protein belongs to the TRAFAC class translation factor GTPase superfamily. Classic translation factor GTPase family. EF-G/EF-2 subfamily.

The protein localises to the cytoplasm. Its function is as follows. Catalyzes the GTP-dependent ribosomal translocation step during translation elongation. During this step, the ribosome changes from the pre-translocational (PRE) to the post-translocational (POST) state as the newly formed A-site-bound peptidyl-tRNA and P-site-bound deacylated tRNA move to the P and E sites, respectively. Catalyzes the coordinated movement of the two tRNA molecules, the mRNA and conformational changes in the ribosome. This Pseudomonas savastanoi pv. phaseolicola (strain 1448A / Race 6) (Pseudomonas syringae pv. phaseolicola (strain 1448A / Race 6)) protein is Elongation factor G.